The chain runs to 258 residues: Type III pantothenate kinase (258 aa).

An ATP-binding site is contributed by 7 to 14 (DVGNTRLK). Residues tyrosine 96 and 103–106 (GADR) each bind substrate. Aspartate 105 acts as the Proton acceptor in catalysis. Threonine 133 contributes to the ATP binding site. Threonine 183 contacts substrate.

This sequence belongs to the type III pantothenate kinase family. Homodimer. The cofactor is NH4(+). K(+) serves as cofactor.

The protein resides in the cytoplasm. The catalysed reaction is (R)-pantothenate + ATP = (R)-4'-phosphopantothenate + ADP + H(+). It participates in cofactor biosynthesis; coenzyme A biosynthesis; CoA from (R)-pantothenate: step 1/5. Its function is as follows. Catalyzes the phosphorylation of pantothenate (Pan), the first step in CoA biosynthesis. This is Type III pantothenate kinase from Acidovorax ebreus (strain TPSY) (Diaphorobacter sp. (strain TPSY)).